The primary structure comprises 280 residues: Putative pyruvate, phosphate dikinase regulatory protein (280 aa).

Gly-152–Ser-159 contributes to the ADP binding site.

It belongs to the pyruvate, phosphate/water dikinase regulatory protein family. PDRP subfamily.

The catalysed reaction is N(tele)-phospho-L-histidyl/L-threonyl-[pyruvate, phosphate dikinase] + ADP = N(tele)-phospho-L-histidyl/O-phospho-L-threonyl-[pyruvate, phosphate dikinase] + AMP + H(+). It catalyses the reaction N(tele)-phospho-L-histidyl/O-phospho-L-threonyl-[pyruvate, phosphate dikinase] + phosphate + H(+) = N(tele)-phospho-L-histidyl/L-threonyl-[pyruvate, phosphate dikinase] + diphosphate. In terms of biological role, bifunctional serine/threonine kinase and phosphorylase involved in the regulation of the pyruvate, phosphate dikinase (PPDK) by catalyzing its phosphorylation/dephosphorylation. In Anaplasma phagocytophilum (strain HZ), this protein is Putative pyruvate, phosphate dikinase regulatory protein.